The following is a 493-amino-acid chain: Protein nucleotidyltransferase YdiU (493 aa).

8 residues coordinate ATP: Gly-81, Gly-83, Arg-84, Lys-103, Asp-115, Gly-116, Arg-166, and Arg-173. The active-site Proton acceptor is the Asp-244. Residues Asn-245 and Asp-254 each coordinate Mg(2+). Residue Asp-254 participates in ATP binding.

It belongs to the SELO family. It depends on Mg(2+) as a cofactor. Requires Mn(2+) as cofactor.

The catalysed reaction is L-seryl-[protein] + ATP = 3-O-(5'-adenylyl)-L-seryl-[protein] + diphosphate. It carries out the reaction L-threonyl-[protein] + ATP = 3-O-(5'-adenylyl)-L-threonyl-[protein] + diphosphate. It catalyses the reaction L-tyrosyl-[protein] + ATP = O-(5'-adenylyl)-L-tyrosyl-[protein] + diphosphate. The enzyme catalyses L-histidyl-[protein] + UTP = N(tele)-(5'-uridylyl)-L-histidyl-[protein] + diphosphate. The catalysed reaction is L-seryl-[protein] + UTP = O-(5'-uridylyl)-L-seryl-[protein] + diphosphate. It carries out the reaction L-tyrosyl-[protein] + UTP = O-(5'-uridylyl)-L-tyrosyl-[protein] + diphosphate. Nucleotidyltransferase involved in the post-translational modification of proteins. It can catalyze the addition of adenosine monophosphate (AMP) or uridine monophosphate (UMP) to a protein, resulting in modifications known as AMPylation and UMPylation. The chain is Protein nucleotidyltransferase YdiU from Shewanella frigidimarina (strain NCIMB 400).